Consider the following 471-residue polypeptide: Neuraminidase (471 aa).

The Intravirion segment spans residues methionine 1–lysine 6. A helical membrane pass occupies residues leucine 7–serine 27. An involved in apical transport and lipid raft association region spans residues serine 11 to valine 33. Residues asparagine 28–serine 471 lie on the Virion surface side of the membrane. Residues asparagine 32, asparagine 47, asparagine 56, asparagine 57, asparagine 67, asparagine 68, and asparagine 87 are each glycosylated (N-linked (GlcNAc...) asparagine; by host). Positions histidine 36 to asparagine 87 are hypervariable stalk region. The interval leucine 90–serine 471 is head of neuraminidase. Cystine bridges form between cysteine 91–cysteine 419, cysteine 123–cysteine 128, cysteine 183–cysteine 230, cysteine 232–cysteine 237, cysteine 278–cysteine 291, cysteine 280–cysteine 289, cysteine 318–cysteine 336, and cysteine 423–cysteine 450. Substrate is bound at residue arginine 117. N-linked (GlcNAc...) asparagine; by host glycosylation occurs at asparagine 145. The Proton donor/acceptor role is filled by aspartate 150. Arginine 151 is a binding site for substrate. N-linked (GlcNAc...) asparagine; by host glycosylation is found at asparagine 200 and asparagine 234. Glutamate 276–glutamate 277 contributes to the substrate binding site. Substrate is bound at residue arginine 292. 3 residues coordinate Ca(2+): aspartate 293, glycine 297, and aspartate 324. Arginine 371 serves as a coordination point for substrate. Asparagine 401 carries an N-linked (GlcNAc...) asparagine; by host glycan. Tyrosine 405 serves as the catalytic Nucleophile.

This sequence belongs to the glycosyl hydrolase 34 family. In terms of assembly, homotetramer. Requires Ca(2+) as cofactor. N-glycosylated.

It is found in the virion membrane. The protein resides in the host apical cell membrane. The catalysed reaction is Hydrolysis of alpha-(2-&gt;3)-, alpha-(2-&gt;6)-, alpha-(2-&gt;8)- glycosidic linkages of terminal sialic acid residues in oligosaccharides, glycoproteins, glycolipids, colominic acid and synthetic substrates.. With respect to regulation, inhibited by the neuraminidase inhibitors zanamivir (Relenza) and oseltamivir (Tamiflu). These drugs interfere with the release of progeny virus from infected cells and are effective against all influenza strains. Resistance to neuraminidase inhibitors is quite rare. Its function is as follows. Catalyzes the removal of terminal sialic acid residues from viral and cellular glycoconjugates. Cleaves off the terminal sialic acids on the glycosylated HA during virus budding to facilitate virus release. Additionally helps virus spread through the circulation by further removing sialic acids from the cell surface. These cleavages prevent self-aggregation and ensure the efficient spread of the progeny virus from cell to cell. Otherwise, infection would be limited to one round of replication. Described as a receptor-destroying enzyme because it cleaves a terminal sialic acid from the cellular receptors. May facilitate viral invasion of the upper airways by cleaving the sialic acid moieties on the mucin of the airway epithelial cells. Likely to plays a role in the budding process through its association with lipid rafts during intracellular transport. May additionally display a raft-association independent effect on budding. Plays a role in the determination of host range restriction on replication and virulence. Sialidase activity in late endosome/lysosome traffic seems to enhance virus replication. This chain is Neuraminidase, found in Aves (Horse).